A 328-amino-acid chain; its full sequence is MTQRVVSIVGPTASGKTGLGIAIARRLAEAGERAEIVNADAYQMYRGMDIGTAKPTAEEQAVVSHHLIDIIDPEDTMSVARFQQLARETIADLQSRGIRPILVGGSGLYARAAIDDITFPGTDPDVRTRLEEREKTEGAGALFDELRAKDPEAAARMDPRNPRRTIRALEVIELTGKPYSASLPRYRYVIPSVQIGLDLDRPDLDHRIDLRTKQMYDDGFIEEVERLRPHLGATAVRALGYQQIIDLLDGIWDVNDAFADIAQKTKRLARKQMGWFGRDPRIHWLQALNPKLVDNAMAIIAHADAGDYDSIDARADEYTQHHLGDITA.

G10–T17 contacts ATP. Substrate is bound at residue T12 to T17.

It belongs to the IPP transferase family. As to quaternary structure, monomer. It depends on Mg(2+) as a cofactor.

It carries out the reaction adenosine(37) in tRNA + dimethylallyl diphosphate = N(6)-dimethylallyladenosine(37) in tRNA + diphosphate. Functionally, catalyzes the transfer of a dimethylallyl group onto the adenine at position 37 in tRNAs that read codons beginning with uridine, leading to the formation of N6-(dimethylallyl)adenosine (i(6)A). This Bifidobacterium longum subsp. infantis (strain ATCC 15697 / DSM 20088 / JCM 1222 / NCTC 11817 / S12) protein is tRNA dimethylallyltransferase.